The following is a 440-amino-acid chain: Xylose isomerase (440 aa).

Residues histidine 100 and aspartate 103 contribute to the active site. Mg(2+) contacts are provided by glutamate 231, glutamate 267, histidine 270, aspartate 295, aspartate 306, aspartate 308, and aspartate 338.

It belongs to the xylose isomerase family. Homotetramer. Requires Mg(2+) as cofactor.

The protein resides in the cytoplasm. It carries out the reaction alpha-D-xylose = alpha-D-xylulofuranose. The polypeptide is Xylose isomerase (Paraburkholderia phytofirmans (strain DSM 17436 / LMG 22146 / PsJN) (Burkholderia phytofirmans)).